The sequence spans 558 residues: Ribonuclease J (558 aa).

Zn(2+)-binding residues include H81, H83, D85, H86, H148, and D170. 371–375 serves as a coordination point for substrate; the sequence is HVSGH. H397 contributes to the Zn(2+) binding site.

It belongs to the metallo-beta-lactamase superfamily. RNA-metabolizing metallo-beta-lactamase-like family. Bacterial RNase J subfamily. As to quaternary structure, homodimer. Zn(2+) is required as a cofactor.

The protein resides in the cytoplasm. Functionally, an RNase that has endonuclease and 5'-3' exonuclease activity. The 5'-exonuclease activity acts on 5'-monophosphate but not 5'-triphosphate ends. Endonuclease activity can cleave within 4 nucleotides of the 5'-end of a triphosphorylated RNA. Plays the major role in pre-23S rRNA maturation, and a minor role in processing of pre-5S and pre-16S rRNA. The polypeptide is Ribonuclease J (Mycolicibacterium smegmatis (strain ATCC 700084 / mc(2)155) (Mycobacterium smegmatis)).